The primary structure comprises 174 residues: Gamma-crystallin S (174 aa).

2 consecutive Beta/gamma crystallin 'Greek key' domains span residues 2 to 40 (GRII…RVES) and 41 to 83 (GAWV…KMIH). The segment at 84 to 89 (FVSGSE) is connecting peptide. Beta/gamma crystallin 'Greek key' domains follow at residues 90–130 (YKIQ…KVLD) and 131–173 (GIWI…KRLM).

Belongs to the beta/gamma-crystallin family.

Its function is as follows. Crystallins are the dominant structural components of the vertebrate eye lens. The sequence is that of Gamma-crystallin S (crygs) from Cyprinus carpio (Common carp).